We begin with the raw amino-acid sequence, 164 residues long: Probable metalloprotease y4qB (164 aa).

Positions 5-142 (IWIPESVVEA…WLPHAWIGQL (138 aa)) constitute an MPN domain. His89, His91, and Asp103 together coordinate Zn(2+).

This sequence belongs to the peptidase M67B family.

In Sinorhizobium fredii (strain NBRC 101917 / NGR234), this protein is Probable metalloprotease y4qB.